A 141-amino-acid polypeptide reads, in one-letter code: MSKAIRIARLTSATCEQIQARMLEACRQIASDHGLVIESAGWRGLEPGFSFEPAFRISIPAPDGKPLNLDREMFAVLAEQYGLEAADFEREFIAGGERFRITGIDPRRPKYPISVERIPDHRGFKFTADNVAMLLKAQAKP.

This is an uncharacterized protein from Sinorhizobium fredii (strain NBRC 101917 / NGR234).